The sequence spans 274 residues: Undecaprenyl-diphosphatase (274 aa).

A run of 8 helical transmembrane segments spans residues 6 to 26, 45 to 65, 94 to 114, 117 to 137, 155 to 174, 191 to 211, 223 to 243, and 253 to 273; these read SLFI…LPVS, AKTF…VMFW, GHIL…HDVI, LFAP…LLAA, YRQA…PGFS, YAAA…ASGL, GDLP…LIAI, and ISFV…YMVF.

Belongs to the UppP family.

The protein resides in the cell inner membrane. The enzyme catalyses di-trans,octa-cis-undecaprenyl diphosphate + H2O = di-trans,octa-cis-undecaprenyl phosphate + phosphate + H(+). Functionally, catalyzes the dephosphorylation of undecaprenyl diphosphate (UPP). Confers resistance to bacitracin. This is Undecaprenyl-diphosphatase from Serratia proteamaculans (strain 568).